The chain runs to 473 residues: 3-isopropylmalate dehydratase large subunit (473 aa).

Residues Cys351, Cys414, and Cys417 each contribute to the [4Fe-4S] cluster site.

It belongs to the aconitase/IPM isomerase family. LeuC type 1 subfamily. Heterodimer of LeuC and LeuD. Requires [4Fe-4S] cluster as cofactor.

It carries out the reaction (2R,3S)-3-isopropylmalate = (2S)-2-isopropylmalate. It functions in the pathway amino-acid biosynthesis; L-leucine biosynthesis; L-leucine from 3-methyl-2-oxobutanoate: step 2/4. In terms of biological role, catalyzes the isomerization between 2-isopropylmalate and 3-isopropylmalate, via the formation of 2-isopropylmaleate. This chain is 3-isopropylmalate dehydratase large subunit, found in Paracidovorax citrulli (strain AAC00-1) (Acidovorax citrulli).